The chain runs to 299 residues: Protease HtpX homolog (299 aa).

The next 2 helical transmembrane spans lie at 14–34 and 39–59; these read ILVM…VGYL and ATGG…IMVG. His144 provides a ligand contact to Zn(2+). Glu145 is a catalytic residue. Zn(2+) is bound at residue His148. The next 2 membrane-spanning stretches (helical) occupy residues 159 to 179 and 196 to 216; these read IALA…NFMW and VFAI…ATMV. Zn(2+) is bound at residue Glu225.

This sequence belongs to the peptidase M48B family. It depends on Zn(2+) as a cofactor.

The protein resides in the cell membrane. This is Protease HtpX homolog from Limosilactobacillus fermentum (strain NBRC 3956 / LMG 18251) (Lactobacillus fermentum).